A 415-amino-acid polypeptide reads, in one-letter code: Lupus La protein homolog (415 aa).

The 93-residue stretch at 7 to 99 folds into the HTH La-type RNA-binding domain; sequence NEKMTALEAK…RRSPSRPLPE (93 aa). Residues serine 92 and serine 94 each carry the phosphoserine modification. The 77-residue stretch at 111-187 folds into the RRM domain; that stretch reads RSVYIKGFPT…TNLLILFKED (77 aa). Position 116 is an N6-acetyllysine (lysine 116). At threonine 120 the chain carries Phosphothreonine. 3 positions are modified to N6-acetyllysine: lysine 128, lysine 327, and lysine 356. Positions 226 to 346 constitute a xRRM domain; the sequence is EGKMGCLLKF…GRFKGSHVFT (121 aa). A disordered region spans residues 349–415; that stretch reads RRFKGKGKGN…KKRENGARDK (67 aa). Threonine 377 is subject to Phosphothreonine. The segment covering 377–415 has biased composition (basic and acidic residues); sequence TRFDDDDRRRGPMKRGRDGRDREEPASKHKKRENGARDK.

As to quaternary structure, interacts with DDX15. May interact with RUFY1. Phosphorylated.

The protein localises to the nucleus. In terms of biological role, binds to the 3' poly(U) terminus of nascent RNA polymerase III transcripts, protecting them from exonuclease digestion and facilitating their folding and maturation. The chain is Lupus La protein homolog (Ssb) from Mus musculus (Mouse).